We begin with the raw amino-acid sequence, 345 residues long: UDP-3-O-acylglucosamine N-acyltransferase (345 aa).

The active-site Proton acceptor is H248.

This sequence belongs to the transferase hexapeptide repeat family. LpxD subfamily. As to quaternary structure, homotrimer.

The catalysed reaction is a UDP-3-O-[(3R)-3-hydroxyacyl]-alpha-D-glucosamine + a (3R)-hydroxyacyl-[ACP] = a UDP-2-N,3-O-bis[(3R)-3-hydroxyacyl]-alpha-D-glucosamine + holo-[ACP] + H(+). The protein operates within bacterial outer membrane biogenesis; LPS lipid A biosynthesis. Catalyzes the N-acylation of UDP-3-O-acylglucosamine using 3-hydroxyacyl-ACP as the acyl donor. Is involved in the biosynthesis of lipid A, a phosphorylated glycolipid that anchors the lipopolysaccharide to the outer membrane of the cell. The sequence is that of UDP-3-O-acylglucosamine N-acyltransferase from Prochlorococcus marinus (strain SARG / CCMP1375 / SS120).